A 61-amino-acid polypeptide reads, in one-letter code: Venom protein 22.1 (61 aa).

Positions 1–18 are cleaved as a signal peptide; sequence MDIKGLLVILFFVLLITG.

This sequence belongs to the non-disulfide-bridged peptide (NDBP) superfamily. Long chain multifunctional peptide (group 2) family. In terms of tissue distribution, expressed by the venom gland.

Its subcellular location is the secreted. This chain is Venom protein 22.1, found in Lychas mucronatus (Chinese swimming scorpion).